Here is an 84-residue protein sequence, read N- to C-terminus: Small ribosomal subunit protein uS17 (84 aa).

This sequence belongs to the universal ribosomal protein uS17 family. In terms of assembly, part of the 30S ribosomal subunit.

In terms of biological role, one of the primary rRNA binding proteins, it binds specifically to the 5'-end of 16S ribosomal RNA. This chain is Small ribosomal subunit protein uS17, found in Alkaliphilus oremlandii (strain OhILAs) (Clostridium oremlandii (strain OhILAs)).